The following is a 3184-amino-acid chain: Probable serine/threonine-protein kinase pats1 (3184 aa).

Residues 369–378 (DPPPPPPSNS) are compositionally biased toward pro residues. Disordered regions lie at residues 369–516 (DPPP…QIPP) and 913–1013 (SITR…TSIL). Over residues 379–415 (SPPISKSTSNNNLNVSNYHNNNNNNNNSNSNLSNSGN) the composition is skewed to low complexity. Polar residues predominate over residues 421–450 (DFQSQNLVKSYNRENSGNSLNSMLHQTSLP). A compositionally biased stretch (low complexity) spans 451–512 (NNNNSNVVNN…NNNNSNNNNS (62 aa)). One can recognise a Myotubularin phosphatase domain in the interval 842–1348 (CFPDHSLLQE…FQDTMWNEYF (507 aa)). Polar residues predominate over residues 913 to 934 (SITRATSPEDQNNGSSNYLLTP). Residues 935–993 (NSPNSSSSNLANNNNSNNNNINNNNNNNNNNNNNNNNNSNNNNNNNNNNNNNNNNNNNN) are compositionally biased toward low complexity. The segment covering 1000–1013 (SRSTTIDNGQTSIL) has biased composition (polar residues). LRR repeat units lie at residues 1391–1412 (FLETLDLSNLRLYYLPSESTLY), 1416–1438 (GLRELNLSKNNLNSISCSLSSLV), 1439–1460 (KLEKLSFEENSITNLPIETVVL), 1467–1488 (SLTELNLSSNQLIDLPIEFSMF), 1491–1512 (SLKKLHLKNNRFSAIPEVLGML), 1514–1535 (NLIELDLSELDLSSSTNSGVGI), 1541–1563 (KLCILNLNQTRIVELPKEFGDLK), 1564–1585 (SLEKLYLDFNSLVTLPHSFRQL), 1587–1608 (NLEELSLSFNSMTELPREVCFL), 1610–1631 (NLKKLMIEGNQIQFLPNEISQL), 1633–1654 (KLMILNVCKNKLDSLPASIGQL), 1656–1678 (QLVSLNLNNNSQLVSLRPTMGLL), and 1680–1701 (NLVELKLDGTRLKTPPPEIVSL). The Roc domain maps to 1716-1910 (GQEQCYKMKL…EKLEALVQSQ (195 aa)). Residues 1716–1910 (GQEQCYKMKL…EKLEALVQSQ (195 aa)) are small GTPase-like. Residues 1729–1736 (GQENVGKT), 1797–1801 (DFAGQ), and 1854–1857 (THLD) each bind GTP. In terms of domain architecture, COR spans 1918–2127 (PRSYMLLENL…KCYWKNGMIL (210 aa)). Positions 2247–2519 (LMIEELIGEG…RLIKIAEAMF (273 aa)) constitute a Protein kinase domain. ATP contacts are provided by residues 2253 to 2261 (IGEGGAALV) and Lys2274. Catalysis depends on Asp2379, which acts as the Proton acceptor. 2 disordered regions span residues 2528-2609 (YQQQ…TISH) and 2652-2671 (NSINNSNSNNEQPLSPNSLL). The span at 2529-2555 (QQQQQQQQQQQQSSPSKSSSTSPIIKS) shows a compositional bias: low complexity. Over residues 2556-2576 (LNLSTVSELGESSNQTPKQNI) the composition is skewed to polar residues. 5 WD repeats span residues 2745 to 2785 (PNQG…KYIQ), 2790 to 2829 (ANKDKKRIHCLYPYMNTVWCGSADDSITIWDIDTYQKIKS), 2909 to 2947 (AHERAIHAMIQVDDHVWTASSDGTIKVWSSTCQSVHTIE), 2949 to 2986 (AHSSRIFTLELVGDFVWSGSWDTTIKIWSTKDYHLVSE), and 2990 to 3040 (KHKD…NSRS). Residues 3055–3126 (GSSNSITNSN…NYYYSNNVNS (72 aa)) are compositionally biased toward low complexity. The disordered stretch occupies residues 3055 to 3164 (GSSNSITNSN…TPPGSKGLMQ (110 aa)). Over residues 3141 to 3157 (HEQTSPNSATPLSSTPP) the composition is skewed to polar residues.

The protein belongs to the protein kinase superfamily. TKL Ser/Thr protein kinase family. ROCO subfamily.

The enzyme catalyses L-seryl-[protein] + ATP = O-phospho-L-seryl-[protein] + ADP + H(+). It carries out the reaction L-threonyl-[protein] + ATP = O-phospho-L-threonyl-[protein] + ADP + H(+). Functionally, may act as a serine/threonine-protein kinase and guanine-nucleotide releasing factor. Essential regulator of cytokinesis involved in the binding to actomyosin cytoskeleton. This chain is Probable serine/threonine-protein kinase pats1 (pats1), found in Dictyostelium discoideum (Social amoeba).